We begin with the raw amino-acid sequence, 428 residues long: Lysophosphatidic acid phosphatase type 6 (428 aa).

The transit peptide at 1-32 directs the protein to the mitochondrion; the sequence is MITGVFSMRLWTPVGVLTSLAYCLHQRRVALA. The substrate binding stretch occupies residues 58–168; sequence RHGARSPLKP…VFIRSTNIFR (111 aa). His59 (nucleophile) is an active-site residue. Catalysis depends on Asp335, which acts as the Proton donor.

This sequence belongs to the histidine acid phosphatase family. As to quaternary structure, monomer. Highly expressed in kidney, heart, small intestine, muscle, liver, prostate, testis, ovary and weakly expressed in thymus and colon.

It is found in the mitochondrion. The catalysed reaction is a phosphate monoester + H2O = an alcohol + phosphate. It carries out the reaction 1-(9Z-octadecenoyl)-sn-glycero-3-phosphate + H2O = 1-(9Z-octadecenoyl)-sn-glycerol + phosphate. In terms of biological role, hydrolyzes lysophosphatidic acid (LPA) containing a medium length fatty acid chain to the corresponding monoacylglycerol. Has highest activity with lysophosphatidic acid containing myristate (C14:0), monounsaturated oleate (C18:1) or palmitate (C16:0), and lower activity with C18:0 and C6:0 lysophosphatidic acid. The sequence is that of Lysophosphatidic acid phosphatase type 6 (ACP6) from Homo sapiens (Human).